A 375-amino-acid chain; its full sequence is Aminomethyltransferase (375 aa).

It belongs to the GcvT family. As to quaternary structure, the glycine cleavage system is composed of four proteins: P, T, L and H.

The catalysed reaction is N(6)-[(R)-S(8)-aminomethyldihydrolipoyl]-L-lysyl-[protein] + (6S)-5,6,7,8-tetrahydrofolate = N(6)-[(R)-dihydrolipoyl]-L-lysyl-[protein] + (6R)-5,10-methylene-5,6,7,8-tetrahydrofolate + NH4(+). Its function is as follows. The glycine cleavage system catalyzes the degradation of glycine. The sequence is that of Aminomethyltransferase from Symbiobacterium thermophilum (strain DSM 24528 / JCM 14929 / IAM 14863 / T).